The primary structure comprises 503 residues: Ribonuclease Y (503 aa).

A helical transmembrane segment spans residues 2-22 (GIIIGLIIVSVALIISLCSLL). One can recognise a KH domain in the interval 193 to 253 (TTNLVKLPND…IRREIATKTL (61 aa)). Residues 319–412 (VLLHSVEVAK…VAIADAISAS (94 aa)) form the HD domain.

This sequence belongs to the RNase Y family.

It is found in the cell membrane. Endoribonuclease that initiates mRNA decay. The polypeptide is Ribonuclease Y (Mesoplasma florum (strain ATCC 33453 / NBRC 100688 / NCTC 11704 / L1) (Acholeplasma florum)).